The sequence spans 137 residues: Nucleoside diphosphate kinase (137 aa).

Lysine 9, phenylalanine 57, arginine 85, threonine 91, arginine 102, and asparagine 112 together coordinate ATP. The active-site Pros-phosphohistidine intermediate is the histidine 115.

The protein belongs to the NDK family. Homotetramer. Requires Mg(2+) as cofactor.

It localises to the cytoplasm. The enzyme catalyses a 2'-deoxyribonucleoside 5'-diphosphate + ATP = a 2'-deoxyribonucleoside 5'-triphosphate + ADP. The catalysed reaction is a ribonucleoside 5'-diphosphate + ATP = a ribonucleoside 5'-triphosphate + ADP. In terms of biological role, major role in the synthesis of nucleoside triphosphates other than ATP. The ATP gamma phosphate is transferred to the NDP beta phosphate via a ping-pong mechanism, using a phosphorylated active-site intermediate. In Syntrophotalea carbinolica (strain DSM 2380 / NBRC 103641 / GraBd1) (Pelobacter carbinolicus), this protein is Nucleoside diphosphate kinase.